Reading from the N-terminus, the 213-residue chain is Adenylate kinase (213 aa).

Residue 10–15 (GAGKGT) coordinates ATP. The segment at 30-59 (STGDMFRAAMANQTEMGILAKSYIDKGDLV) is NMP. AMP is bound by residues threonine 31, arginine 36, 57–59 (DLV), 86–89 (GYPR), and glutamine 93. The interval 127-160 (GRIIHKETGETFHKVFNPPVGDYKEEDFYQREDD) is LID. ATP contacts are provided by residues arginine 128 and 137–138 (TF). AMP-binding residues include arginine 157 and arginine 168. Glutamine 196 contributes to the ATP binding site.

Belongs to the adenylate kinase family. Monomer.

It localises to the cytoplasm. It carries out the reaction AMP + ATP = 2 ADP. Its pathway is purine metabolism; AMP biosynthesis via salvage pathway; AMP from ADP: step 1/1. Its function is as follows. Catalyzes the reversible transfer of the terminal phosphate group between ATP and AMP. Plays an important role in cellular energy homeostasis and in adenine nucleotide metabolism. This chain is Adenylate kinase, found in Streptococcus suis (strain 98HAH33).